Here is a 502-residue protein sequence, read N- to C-terminus: METMSDYSKEVSEALSALRGELSALSAAISNTVRAGSYSAPVAKDCKAGHCDSKAVLKSLSRSARDLDSAVEAVSSNCEWASSGYGKQIARALRDDAVRVKREVESTRDAVDVVTPSCCVQGLAEEAGKLSEMAAVYRCMATVFETADSHGVREMLAKVDGLKQTMSGFKRLLGKTAEIDGLSDSVIRLGRSIGEVLPATEGKAMRDLVKQCERLNGLVVDGSRKVEEQCSKLRDMASQSYVVADLASQYDVLGGKAQEALSASDALEQAAAVALRAKAAADAVAKSLDSLDVKKLDRLLEQASAVSGLLAKKNDLDAVVTSLAGLEALVAKKDELYKICAAVNSVDKSKLELLNVKPDRLKSLTEQTVVVSQMTTALATFNEDKLDSVLGKYMQMHRFLGMATQLKLMSDSLAEFQPAKMAQMAAAASQLKDFLTDQTVSRLEKVSAAVDATDVTKYASAFSDGGMVSDMTKAYETVKAFAAVVNSLDSKKLKLVAECAKK.

This is an uncharacterized protein from Frog virus 3 (isolate Goorha) (FV-3).